The sequence spans 1141 residues: cGMP-inhibited 3',5'-cyclic phosphodiesterase 3A (1141 aa).

The interval 1–42 is disordered; the sequence is MAVRGEAAQDLAKPGLGGASPARVARGNHRHRGESSPSPRGS. A helical membrane pass occupies residues 62-82; that stretch reads SALCAGSLSVLLALLVRLVGG. Positions 90–111 are disordered; sequence KSQEAAAEEEEEEGARGGVFPG. The next 5 membrane-spanning stretches (helical) occupy residues 127 to 147, 157 to 177, 182 to 202, 207 to 227, and 229 to 249; these read LQPA…GLCL, AVAL…SLGV, LLSL…TWLV, LGVL…VSLE, and FKVA…LLLA. The residue at position 310 (serine 310) is a Phosphoserine. Residues 433 to 445 are compositionally biased toward low complexity; the sequence is RVSSTWTTTTSAT. The tract at residues 433 to 483 is disordered; the sequence is RVSSTWTTTTSATGLPTLEPAPVRRDRSASIKPHEAPSPSAVNPDSWNAPG. Residues 454–467 are compositionally biased toward basic and acidic residues; sequence PVRRDRSASIKPHE. Positions 472–483 are enriched in polar residues; sequence SAVNPDSWNAPG. Phosphoserine occurs at positions 492, 520, 524, and 533. The disordered stretch occupies residues 505-654; it reads VKAKKQNRPG…CQREPQRKAS (150 aa). Over residues 522-532 the composition is skewed to pro residues; that stretch reads VPSPSSSPPQG. Residues 533-544 show a composition bias toward low complexity; sequence SPASSPVSNSAS. Polar residues predominate over residues 618–637; sequence TSQVTSDYETNNNSDSSDIL. Positions 669-1141 are interaction with SLFN12; it reads KPILAPEPLV…EETLAPQPDL (473 aa). The 420-residue stretch at 674–1093 folds into the PDEase domain; the sequence is PEPLVMDNLD…MMWKKVIEEE (420 aa). The active-site Proton donor is histidine 752. Histidine 752 lines the AMP pocket. Histidine 756, histidine 836, aspartate 837, and aspartate 950 together coordinate Mn(2+). Residues aspartate 837, aspartate 950, and glutamine 1001 each coordinate AMP. Aspartate 837 contributes to the Mg(2+) binding site. 2 disordered regions span residues 1024–1060 and 1120–1141; these read GKWV…SSIA and KEEE…QPDL. The segment covering 1029–1046 has biased composition (acidic residues); it reads DSDDSGDTDDPEEEEEEA. Residue serine 1033 is modified to Phosphoserine. The residue at position 1036 (threonine 1036) is a Phosphothreonine. Lysine 1120 is covalently cross-linked (Glycyl lysine isopeptide (Lys-Gly) (interchain with G-Cter in SUMO2)).

This sequence belongs to the cyclic nucleotide phosphodiesterase family. PDE3 subfamily. Mn(2+) serves as cofactor. It depends on Mg(2+) as a cofactor.

It localises to the membrane. The protein localises to the cytoplasm. The protein resides in the cytosol. It catalyses the reaction a nucleoside 3',5'-cyclic phosphate + H2O = a nucleoside 5'-phosphate + H(+). The catalysed reaction is 3',5'-cyclic AMP + H2O = AMP + H(+). It carries out the reaction 3',5'-cyclic GMP + H2O = GMP + H(+). The enzyme catalyses 3',5'-cyclic UMP + H2O = UMP + H(+). Its activity is regulated as follows. Inhibited by cGMP. In terms of biological role, cyclic nucleotide phosphodiesterase with specificity for the second messengers cAMP and cGMP, which are key regulators of many important physiological processes. Also has activity toward cUMP. Independently of its catalytic activity it is part of an E2/17beta-estradiol-induced pro-apoptotic signaling pathway. E2 stabilizes the PDE3A/SLFN12 complex in the cytosol, promoting the dephosphorylation of SLFN12 and activating its pro-apoptotic ribosomal RNA/rRNA ribonuclease activity. This apoptotic pathway might be relevant in tissues with high concentration of E2 and be for instance involved in placenta remodeling. This is cGMP-inhibited 3',5'-cyclic phosphodiesterase 3A from Mus musculus (Mouse).